We begin with the raw amino-acid sequence, 222 residues long: Glutathione S-transferase A5 (222 aa).

N-acetylalanine is present on alanine 2. The region spanning glutamate 3–glycine 83 is the GST N-terminal domain. Position 4 is an N6-succinyllysine (lysine 4). Glutathione is bound by residues tyrosine 9, arginine 45, glutamine 54–valine 55, and glutamine 67–threonine 68. The region spanning aspartate 85 to methionine 208 is the GST C-terminal domain.

The protein belongs to the GST superfamily. Alpha family. Homodimer. In terms of tissue distribution, expression not detected.

It localises to the cytoplasm. The catalysed reaction is RX + glutathione = an S-substituted glutathione + a halide anion + H(+). The chain is Glutathione S-transferase A5 (GSTA5) from Homo sapiens (Human).